The chain runs to 187 residues: ATP synthase subunit delta, chloroplastic (187 aa).

It belongs to the ATPase delta chain family. F-type ATPases have 2 components, F(1) - the catalytic core - and F(0) - the membrane proton channel. F(1) has five subunits: alpha(3), beta(3), gamma(1), delta(1), epsilon(1). CF(0) has four main subunits: a(1), b(1), b'(1) and c(10-14). The alpha and beta chains form an alternating ring which encloses part of the gamma chain. F(1) is attached to F(0) by a central stalk formed by the gamma and epsilon chains, while a peripheral stalk is formed by the delta, b and b' chains.

It localises to the plastid. The protein resides in the chloroplast thylakoid membrane. F(1)F(0) ATP synthase produces ATP from ADP in the presence of a proton or sodium gradient. F-type ATPases consist of two structural domains, F(1) containing the extramembraneous catalytic core and F(0) containing the membrane proton channel, linked together by a central stalk and a peripheral stalk. During catalysis, ATP synthesis in the catalytic domain of F(1) is coupled via a rotary mechanism of the central stalk subunits to proton translocation. Its function is as follows. This protein is part of the stalk that links CF(0) to CF(1). It either transmits conformational changes from CF(0) to CF(1) or is implicated in proton conduction. The sequence is that of ATP synthase subunit delta, chloroplastic from Thalassiosira pseudonana (Marine diatom).